The chain runs to 273 residues: Large ribosomal subunit protein uL2 (273 aa).

The tract at residues 228 to 273 (VDHPHGGGEGKTSGGRHPVTPWGFPTKGKKTRKNKRTSKFIVKKRK) is disordered. The span at 254–273 (KGKKTRKNKRTSKFIVKKRK) shows a compositional bias: basic residues.

This sequence belongs to the universal ribosomal protein uL2 family. Part of the 50S ribosomal subunit. Forms a bridge to the 30S subunit in the 70S ribosome.

Functionally, one of the primary rRNA binding proteins. Required for association of the 30S and 50S subunits to form the 70S ribosome, for tRNA binding and peptide bond formation. It has been suggested to have peptidyltransferase activity; this is somewhat controversial. Makes several contacts with the 16S rRNA in the 70S ribosome. This is Large ribosomal subunit protein uL2 from Rickettsia felis (strain ATCC VR-1525 / URRWXCal2) (Rickettsia azadi).